Consider the following 478-residue polypeptide: Probable L-ascorbate peroxidase 8, chloroplastic (478 aa).

The span at 1–13 (MAERIAASLLPAA) shows a compositional bias: low complexity. Disordered regions lie at residues 1-31 (MAERIAASLLPAASPSPAPSPPPPRPRVSAA) and 44-66 (GGLRLRSRPSRFPQKAATTRSGR). The N-terminal 76 residues, 1–76 (MAERIAASLL…AGAGARAVVR (76 aa)), are a transit peptide targeting the chloroplast. Positions 14–26 (SPSPAPSPPPPRP) are enriched in pro residues. The Proton acceptor role is filled by H117. Positions 245 to 276 (AHTLGRSRPDRSGWGKPETKYTKDGPGEPGGQ) are disordered. Heme b is bound at residue H246. K(+) is bound at residue T247. The segment covering 251 to 270 (SRPDRSGWGKPETKYTKDGP) has biased composition (basic and acidic residues). Residues T279 and D286 each contribute to the K(+) site. The disordered stretch occupies residues 346–417 (AKFDPPEGFS…DNNGAAPQPE (72 aa)). Pro residues predominate over residues 369 to 381 (PAPAPAAAPPPPP). The span at 394–406 (PVTVGAAVASSPA) shows a compositional bias: low complexity. A helical membrane pass occupies residues 458–478 (YFLNIMLLIGGLAFLTSLLGS).

This sequence belongs to the peroxidase family. Ascorbate peroxidase subfamily. Interacts with SWEET11/OS8N3. The cofactor is heme b. Expressed in roots, leaves, stems and flowers. Expressed in leaves, shoots and panicles. Expressed at low levels in roots.

It localises to the plastid. It is found in the chloroplast thylakoid membrane. It carries out the reaction L-ascorbate + H2O2 = L-dehydroascorbate + 2 H2O. Its function is as follows. Involved in defense response and tolerance to the bacterial pathogen Xanthomonas oryzae pv. oryzae (Xoo). Plays an important role in hydrogen peroxide removal during infection by Xoo. Involved in response to abiotic stress. Plays a role in hydrogen peroxide removal durings salt stress. This chain is Probable L-ascorbate peroxidase 8, chloroplastic, found in Oryza sativa subsp. japonica (Rice).